A 208-amino-acid polypeptide reads, in one-letter code: Outer-membrane lipoprotein carrier protein (208 aa).

A signal peptide spans 1–23; that stretch reads MKKTVKNLTALLTLALAAPWALA.

This sequence belongs to the LolA family. In terms of assembly, monomer.

It localises to the periplasm. In terms of biological role, participates in the translocation of lipoproteins from the inner membrane to the outer membrane. Only forms a complex with a lipoprotein if the residue after the N-terminal Cys is not an aspartate (The Asp acts as a targeting signal to indicate that the lipoprotein should stay in the inner membrane). The protein is Outer-membrane lipoprotein carrier protein of Actinobacillus succinogenes (strain ATCC 55618 / DSM 22257 / CCUG 43843 / 130Z).